A 348-amino-acid polypeptide reads, in one-letter code: Ion-translocating oxidoreductase complex subunit D (348 aa).

4 consecutive transmembrane segments (helical) span residues Trp23–Thr43, Leu44–Leu64, Ala72–Pro91, and Ile126–Ile146. Thr187 is subject to FMN phosphoryl threonine. The next 5 helical transmembrane spans lie at Phe214 to Leu234, Ile243 to Pro263, Thr266 to Ala286, Leu300 to Pro320, and Asp321 to Thr341.

This sequence belongs to the NqrB/RnfD family. In terms of assembly, the complex is composed of six subunits: RnfA, RnfB, RnfC, RnfD, RnfE and RnfG. FMN serves as cofactor.

It localises to the cell inner membrane. In terms of biological role, part of a membrane-bound complex that couples electron transfer with translocation of ions across the membrane. This is Ion-translocating oxidoreductase complex subunit D from Vibrio cholerae serotype O1 (strain ATCC 39315 / El Tor Inaba N16961).